Reading from the N-terminus, the 990-residue chain is Leucine--tRNA ligase (990 aa).

The 'HIGH' region motif lies at 74–85 (PYPSGKGLHVGH). Positions 573–602 (LPINLPDVPDYSPKTFDPEDAESDPEAPLS) are disordered. The short motif at 763 to 767 (KMGKS) is the 'KMSKS' region element. Position 766 (lysine 766) interacts with ATP.

It belongs to the class-I aminoacyl-tRNA synthetase family.

Its subcellular location is the cytoplasm. The catalysed reaction is tRNA(Leu) + L-leucine + ATP = L-leucyl-tRNA(Leu) + AMP + diphosphate. The protein is Leucine--tRNA ligase of Bifidobacterium adolescentis (strain ATCC 15703 / DSM 20083 / NCTC 11814 / E194a).